A 635-amino-acid chain; its full sequence is Biosynthetic arginine decarboxylase (635 aa).

Position 100 is an N6-(pyridoxal phosphate)lysine (K100). 282–292 (VDIGGGLGVDY) provides a ligand contact to substrate.

Belongs to the Orn/Lys/Arg decarboxylase class-II family. SpeA subfamily. The cofactor is Mg(2+). Requires pyridoxal 5'-phosphate as cofactor.

It catalyses the reaction L-arginine + H(+) = agmatine + CO2. It functions in the pathway amine and polyamine biosynthesis; agmatine biosynthesis; agmatine from L-arginine: step 1/1. In terms of biological role, catalyzes the biosynthesis of agmatine from arginine. This Geobacter sulfurreducens (strain ATCC 51573 / DSM 12127 / PCA) protein is Biosynthetic arginine decarboxylase.